The primary structure comprises 130 residues: Ribosome-binding factor A (130 aa).

The protein belongs to the RbfA family. As to quaternary structure, monomer. Binds 30S ribosomal subunits, but not 50S ribosomal subunits or 70S ribosomes.

The protein localises to the cytoplasm. One of several proteins that assist in the late maturation steps of the functional core of the 30S ribosomal subunit. Associates with free 30S ribosomal subunits (but not with 30S subunits that are part of 70S ribosomes or polysomes). Required for efficient processing of 16S rRNA. May interact with the 5'-terminal helix region of 16S rRNA. In Prochlorococcus marinus (strain MIT 9215), this protein is Ribosome-binding factor A.